The primary structure comprises 160 residues: Protein-export protein SecB (160 aa).

Belongs to the SecB family. Homotetramer, a dimer of dimers. One homotetramer interacts with 1 SecA dimer.

It is found in the cytoplasm. One of the proteins required for the normal export of preproteins out of the cell cytoplasm. It is a molecular chaperone that binds to a subset of precursor proteins, maintaining them in a translocation-competent state. It also specifically binds to its receptor SecA. The polypeptide is Protein-export protein SecB (Aliivibrio salmonicida (strain LFI1238) (Vibrio salmonicida (strain LFI1238))).